The chain runs to 682 residues: DNA ligase (682 aa).

NAD(+) contacts are provided by residues 43–47, 92–93, and D123; these read DSEYD and SL. K125 (N6-AMP-lysine intermediate) is an active-site residue. NAD(+)-binding residues include R146, E184, K302, and K326. C420, C423, C438, and C443 together coordinate Zn(2+). A BRCT domain is found at 603–682; the sequence is TTKGFFTGKK…TFLQKLLIVL (80 aa).

It belongs to the NAD-dependent DNA ligase family. LigA subfamily. Mg(2+) serves as cofactor. Requires Mn(2+) as cofactor.

The enzyme catalyses NAD(+) + (deoxyribonucleotide)n-3'-hydroxyl + 5'-phospho-(deoxyribonucleotide)m = (deoxyribonucleotide)n+m + AMP + beta-nicotinamide D-nucleotide.. Its function is as follows. DNA ligase that catalyzes the formation of phosphodiester linkages between 5'-phosphoryl and 3'-hydroxyl groups in double-stranded DNA using NAD as a coenzyme and as the energy source for the reaction. It is essential for DNA replication and repair of damaged DNA. The chain is DNA ligase from Lawsonia intracellularis (strain PHE/MN1-00).